The chain runs to 537 residues: Ribonuclease Y (537 aa).

Residues 4–24 (FPIIMSVFAAIIGLVIGYVSV) form a helical membrane-spanning segment. Positions 112–148 (ASTLDRKDDNLSNKEKALEQKEQSLSDKSKHIDAREE) are disordered. In terms of domain architecture, KH spans 227–287 (TNSTVHLPDD…IRREIARMTM (61 aa)). Residues 353-446 (VLRHSIEVAK…VAAADALSAA (94 aa)) enclose the HD domain.

The protein belongs to the RNase Y family.

It localises to the cell membrane. Its function is as follows. Endoribonuclease that initiates mRNA decay. In Streptococcus sanguinis (strain SK36), this protein is Ribonuclease Y.